Here is a 141-residue protein sequence, read N- to C-terminus: Large ribosomal subunit protein uL16 (141 aa).

The interval 1–23 is disordered; that stretch reads MLMPKRTKWRKQQKGRNRGKSFR.

This sequence belongs to the universal ribosomal protein uL16 family. As to quaternary structure, part of the 50S ribosomal subunit.

Binds 23S rRNA and is also seen to make contacts with the A and possibly P site tRNAs. This chain is Large ribosomal subunit protein uL16, found in Sulfurovum sp. (strain NBC37-1).